A 712-amino-acid chain; its full sequence is MDRPPSLPHYQNPNPNLFYHYPPPNSNPNFFFRPPPPPLQNPNNYSIVPSPPPIRELSGTLSSLKSLLSECQRTLDSLSQNLALDHSSLLQKDENGCFVRCPFDSNHFMPPEALFLHSLRCPNTLDLIHLLESFSSYRNTLELPCELQLNNGDGDLCISLDDLADFGSNFFYRDCPGAVKFSELDGKKRTLTLPHVLSVECSDFVGSDEKVKKIVLDKCLGVLPSDLCAMKNEIDQWRDFPSSYSSSVLSSIVGSKVVEISALRKWILVNSTRYGVIIDTFMRDHIFLLFRLCLKSAVKEACGFRMESDATDVGEQKIMSCKSSTFECPVFIQVLSWLASQLAVLYGEGNGKFFALDMFKQCIVESASQVMLFRLEGTRSKCSGVVEDLDDARLRNKDVIMEKPFENSSGGECGKTLDSPQVISVSRVSAAVAALYERSLLEEKIRAVRYAQPLTRYQRAAELGFMTAKADEERNRRCSYRPIIDHDGRPRQRSLNQDMDKMKTREELLAEERDYKRRRMSYRGKKVKRTPRQVLHDMIEEYTEEIKLAGGIGCFEKGMPLQSRSPIGNDQKESDFGYSIPSTDKQWKGENRADIEYPIDNRQNSDKVKRHDEYDSGSSQRQQSHRSYKHSDRRDDKLRDRRKDKHNDRRDDEFTRTKRHSIEGESYQNYRSSREKSSSDYKTKRDDPYDRRSQQPRNQNLFEDRYIPTEKE.

The CHHC U11-48K-type zinc-finger motif lies at 98–125; it reads FVRCPFDSNHFMPPEALFLHSLRCPNTL. Positions 101, 107, 117, and 121 each coordinate Zn(2+). The tract at residues 562–712 is disordered; the sequence is QSRSPIGNDQ…EDRYIPTEKE (151 aa). Composition is skewed to basic and acidic residues over residues 585-595, 603-614, 629-663, 672-693, and 702-712; these read KQWKGENRADI, QNSDKVKRHDEY, KHSD…HSIE, SSRE…DRRS, and FEDRYIPTEKE.

In terms of assembly, component of the U11/U12 snRNPs that are part of the U12-type spliceosome. Not found in the major spliceosome.

The protein resides in the nucleus. In terms of biological role, likely involved in U12-type 5' splice site recognition. The chain is U11/U12 small nuclear ribonucleoprotein 48 kDa protein (SNRNP48) from Arabidopsis thaliana (Mouse-ear cress).